The primary structure comprises 274 residues: Undecaprenyl-diphosphatase (274 aa).

Helical transmembrane passes span Met-1 to Ile-21, Val-48 to Gly-68, Leu-84 to Ile-104, Leu-108 to Ile-128, Ile-143 to Gly-163, Phe-187 to Ser-207, Ile-214 to Ile-234, and Val-254 to Leu-274.

The protein belongs to the UppP family.

The protein resides in the cell membrane. It carries out the reaction di-trans,octa-cis-undecaprenyl diphosphate + H2O = di-trans,octa-cis-undecaprenyl phosphate + phosphate + H(+). Catalyzes the dephosphorylation of undecaprenyl diphosphate (UPP). Confers resistance to bacitracin. The sequence is that of Undecaprenyl-diphosphatase from Deinococcus geothermalis (strain DSM 11300 / CIP 105573 / AG-3a).